The primary structure comprises 160 residues: Transcriptional repressor NrdR (160 aa).

The segment covering 1–11 (MRCPNCNSLDT) has biased composition (polar residues). Residues 1 to 20 (MRCPNCNSLDTQVKDSRPTE) form a disordered region. Residues 3 to 34 (CPNCNSLDTQVKDSRPTEDSSVIRRRRVCIAC) fold into a zinc finger. Residues 49–139 (LTVIKRNGRR…VYRNFREAKD (91 aa)) form the ATP-cone domain.

This sequence belongs to the NrdR family. Requires Zn(2+) as cofactor.

Its function is as follows. Negatively regulates transcription of bacterial ribonucleotide reductase nrd genes and operons by binding to NrdR-boxes. In Rhodopseudomonas palustris (strain BisB5), this protein is Transcriptional repressor NrdR.